Reading from the N-terminus, the 388-residue chain is Succinate--CoA ligase [ADP-forming] subunit beta (388 aa).

The ATP-grasp domain occupies 9 to 244; it reads KQLFAEYGLP…PSQDDPREAH (236 aa). ATP is bound by residues K46, 53 to 55, E99, T102, and E107; that span reads GRG. Mg(2+) contacts are provided by N199 and D213. Substrate is bound by residues N264 and 321–323; that span reads GIV.

Belongs to the succinate/malate CoA ligase beta subunit family. Heterotetramer of two alpha and two beta subunits. The cofactor is Mg(2+).

It carries out the reaction succinate + ATP + CoA = succinyl-CoA + ADP + phosphate. The catalysed reaction is GTP + succinate + CoA = succinyl-CoA + GDP + phosphate. Its pathway is carbohydrate metabolism; tricarboxylic acid cycle; succinate from succinyl-CoA (ligase route): step 1/1. In terms of biological role, succinyl-CoA synthetase functions in the citric acid cycle (TCA), coupling the hydrolysis of succinyl-CoA to the synthesis of either ATP or GTP and thus represents the only step of substrate-level phosphorylation in the TCA. The beta subunit provides nucleotide specificity of the enzyme and binds the substrate succinate, while the binding sites for coenzyme A and phosphate are found in the alpha subunit. This Ectopseudomonas mendocina (strain ymp) (Pseudomonas mendocina) protein is Succinate--CoA ligase [ADP-forming] subunit beta.